A 301-amino-acid chain; its full sequence is Fluoroquinolones export ATP-binding protein MT2762 (301 aa).

An ABC transporter domain is found at 18 to 246; it reads IRVRGLTFRY…RSRRRVRVEY (229 aa). 52 to 59 contributes to the ATP binding site; that stretch reads GPSGAGKS.

The protein belongs to the ABC transporter superfamily. As to quaternary structure, the complex is composed of 2 ATP-binding proteins and 2 transmembrane proteins.

The protein localises to the cell membrane. Functionally, part of the ABC transporter complex involved in fluoroquinolones export. Probably responsible for energy coupling to the transport system. In Mycobacterium tuberculosis (strain CDC 1551 / Oshkosh), this protein is Fluoroquinolones export ATP-binding protein MT2762.